Here is a 645-residue protein sequence, read N- to C-terminus: Mediator of RNA polymerase II transcription subunit 17 (645 aa).

The segment at 215 to 234 (KAEDEESGSPPASPSGSGAA) is disordered. The span at 222–234 (GSPPASPSGSGAA) shows a compositional bias: low complexity.

It belongs to the Mediator complex subunit 17 family. In terms of assembly, component of the Mediator complex.

It is found in the nucleus. In terms of biological role, component of the Mediator complex, a coactivator involved in the regulated transcription of nearly all RNA polymerase II-dependent genes. Mediator functions as a bridge to convey information from gene-specific regulatory proteins to the basal RNA polymerase II transcription machinery. Mediator is recruited to promoters by direct interactions with regulatory proteins and serves as a scaffold for the assembly of a functional preinitiation complex with RNA polymerase II and the general transcription factors. The protein is Mediator of RNA polymerase II transcription subunit 17 (MED17) of Anopheles gambiae (African malaria mosquito).